We begin with the raw amino-acid sequence, 774 residues long: Vezatin (774 aa).

Helical transmembrane passes span 138–158 and 163–183; these read IATP…AVAA and SISS…FTVL. A coiled-coil region spans residues 430–457; it reads VRSLQLHLKALLNEVIVLEDELDKLSSC. The span at 746–757 shows a compositional bias: acidic residues; sequence FGDEWDDDDDNE. The segment at 746 to 774 is disordered; that stretch reads FGDEWDDDDDNEDHDHDKERNNDSSQLEG. Positions 758-767 are enriched in basic and acidic residues; sequence DHDHDKERNN.

It belongs to the vezatin family. As to quaternary structure, interacts with myosin VIIa and the cadherin-catenins complex.

The protein localises to the cell membrane. Its subcellular location is the cell junction. It is found in the adherens junction. The protein resides in the nucleus. Its function is as follows. Plays a pivotal role in the establishment of adherens junctions and their maintenance in adult life. The protein is Vezatin (vezt) of Xenopus laevis (African clawed frog).